The primary structure comprises 526 residues: Bifunctional purine biosynthesis protein PurH (526 aa).

The 147-residue stretch at 1-147 (MPSIKRALIS…KNWKHVAIVT (147 aa)) folds into the MGS-like domain.

This sequence belongs to the PurH family.

It catalyses the reaction (6R)-10-formyltetrahydrofolate + 5-amino-1-(5-phospho-beta-D-ribosyl)imidazole-4-carboxamide = 5-formamido-1-(5-phospho-D-ribosyl)imidazole-4-carboxamide + (6S)-5,6,7,8-tetrahydrofolate. The enzyme catalyses IMP + H2O = 5-formamido-1-(5-phospho-D-ribosyl)imidazole-4-carboxamide. It functions in the pathway purine metabolism; IMP biosynthesis via de novo pathway; 5-formamido-1-(5-phospho-D-ribosyl)imidazole-4-carboxamide from 5-amino-1-(5-phospho-D-ribosyl)imidazole-4-carboxamide (10-formyl THF route): step 1/1. Its pathway is purine metabolism; IMP biosynthesis via de novo pathway; IMP from 5-formamido-1-(5-phospho-D-ribosyl)imidazole-4-carboxamide: step 1/1. The chain is Bifunctional purine biosynthesis protein PurH from Neisseria meningitidis serogroup C / serotype 2a (strain ATCC 700532 / DSM 15464 / FAM18).